A 368-amino-acid chain; its full sequence is MTVKLTIDCMGGDHGPSVTVPAAVNFARSHPDAQLLLVGIESAIRAQLKKLKAQDLPALTVVPASEIVAMDDPVEVALRKKKDSSMRVALNRVKEGEAQACISAGNTGALMAVSRYVLKTLSGIERPAIASALPNPNGYTMMLDLGANVDCEPQHLLQFAEMGHALVSALEGKERPTIGLLNIGEEVIKGNDTIKRAGELLRASTLNFHGNVEGNDIFKGTVDVIVCDGFVGNVALKTSEGLAQMLSNIIKEEFGRSLLTKVMAVLALPVLMRFKKRVDHRQYNGAALLGLRGLVIKSHGSADAYGFEWAIKRGYDAVKNGVLERLARAMEENEGSLEQAARDASGAGHASPIAGQPAEPYAAQSSKA.

The segment at 334-368 is disordered; sequence EGSLEQAARDASGAGHASPIAGQPAEPYAAQSSKA.

It belongs to the PlsX family. Homodimer. Probably interacts with PlsY.

It localises to the cytoplasm. The catalysed reaction is a fatty acyl-[ACP] + phosphate = an acyl phosphate + holo-[ACP]. It participates in lipid metabolism; phospholipid metabolism. Catalyzes the reversible formation of acyl-phosphate (acyl-PO(4)) from acyl-[acyl-carrier-protein] (acyl-ACP). This enzyme utilizes acyl-ACP as fatty acyl donor, but not acyl-CoA. This is Phosphate acyltransferase from Paraburkholderia xenovorans (strain LB400).